Consider the following 263-residue polypeptide: Metaxin-2 (263 aa).

Serine 2 is modified (N-acetylserine).

Belongs to the metaxin family. Interacts with MTX1/metaxin-1. Associates with the mitochondrial contact site and cristae organizing system (MICOS) complex, composed of at least MICOS10/MIC10, CHCHD3/MIC19, CHCHD6/MIC25, APOOL/MIC27, IMMT/MIC60, APOO/MIC23/MIC26 and QIL1/MIC13. This complex was also known under the names MINOS or MitOS complex. The MICOS complex associates with mitochondrial outer membrane proteins SAMM50, MTX1 and MTX2 (together described as components of the mitochondrial outer membrane sorting assembly machinery (SAM) complex) and DNAJC11, mitochondrial inner membrane protein TMEM11 and with HSPA9. The MICOS and SAM complexes together with DNAJC11 are part of a large protein complex spanning both membranes termed the mitochondrial intermembrane space bridging (MIB) complex.

Its subcellular location is the mitochondrion outer membrane. The protein localises to the mitochondrion. In terms of biological role, involved in transport of proteins into the mitochondrion. The protein is Metaxin-2 (Mtx2) of Mus musculus (Mouse).